The sequence spans 181 residues: Urease accessory protein UreE (181 aa).

The tract at residues 143-181 (FDPEPGAYNQAGQGHSHGHSHGHSHNHDHEHSHGHKHAH) is disordered.

Belongs to the UreE family.

Its subcellular location is the cytoplasm. In terms of biological role, involved in urease metallocenter assembly. Binds nickel. Probably functions as a nickel donor during metallocenter assembly. This Marinobacter nauticus (strain ATCC 700491 / DSM 11845 / VT8) (Marinobacter aquaeolei) protein is Urease accessory protein UreE.